A 151-amino-acid polypeptide reads, in one-letter code: Regulatory protein RecX (151 aa).

Belongs to the RecX family.

The protein localises to the cytoplasm. Functionally, modulates RecA activity. The protein is Regulatory protein RecX of Herminiimonas arsenicoxydans.